Consider the following 389-residue polypeptide: Na(+)/H(+) antiporter NhaA (389 aa).

11 helical membrane passes run 17–37 (ILLLVAVALAMLMANSPLAGL), 59–79 (LLLWINDGLMALFFLLIGLEV), 95–115 (SLPTFAAIGGMLVPAGIYLLF), 124–144 (AGWAIPAATDIAFALGIMALL), 154–174 (VFLLALAIIDDLGVIVIIALF), 177–197 (TDLSTISLIIASIAIVGLVAL), 213–233 (LVLWVAVLKSGVHATLAGVII), 261–281 (FLILPVFAFANAGVALGNMSL), 287–307 (PVPVGIALGLMLGKPIGVMLF), 328–348 (IAPVAAMCGIGFTMSMFIASL), and 363–383 (LGTLIGSIIAALIGYFWLSKV).

This sequence belongs to the NhaA Na(+)/H(+) (TC 2.A.33) antiporter family.

The protein resides in the cell inner membrane. It carries out the reaction Na(+)(in) + 2 H(+)(out) = Na(+)(out) + 2 H(+)(in). Functionally, na(+)/H(+) antiporter that extrudes sodium in exchange for external protons. The protein is Na(+)/H(+) antiporter NhaA of Shewanella sp. (strain MR-7).